The primary structure comprises 347 residues: Holliday junction branch migration complex subunit RuvB (347 aa).

The tract at residues 4 to 185 (TDRLITPAPL…FGIISRLEFY (182 aa)) is large ATPase domain (RuvB-L). Residues Leu24, Arg25, Gly66, Lys69, Thr70, Thr71, 132-134 (EDY), Arg175, Tyr185, and Arg222 each bind ATP. Thr70 lines the Mg(2+) pocket. The segment at 186 to 256 (SVEELTQIVM…VADAALLMLD (71 aa)) is small ATPAse domain (RuvB-S). Residues 259 to 347 (AIGLDVMDRK…LSADLWDEKQ (89 aa)) form a head domain (RuvB-H) region. Residues Arg295, Arg314, and Arg319 each contribute to the DNA site.

It belongs to the RuvB family. As to quaternary structure, homohexamer. Forms an RuvA(8)-RuvB(12)-Holliday junction (HJ) complex. HJ DNA is sandwiched between 2 RuvA tetramers; dsDNA enters through RuvA and exits via RuvB. An RuvB hexamer assembles on each DNA strand where it exits the tetramer. Each RuvB hexamer is contacted by two RuvA subunits (via domain III) on 2 adjacent RuvB subunits; this complex drives branch migration. In the full resolvosome a probable DNA-RuvA(4)-RuvB(12)-RuvC(2) complex forms which resolves the HJ.

The protein localises to the cytoplasm. It catalyses the reaction ATP + H2O = ADP + phosphate + H(+). The RuvA-RuvB-RuvC complex processes Holliday junction (HJ) DNA during genetic recombination and DNA repair, while the RuvA-RuvB complex plays an important role in the rescue of blocked DNA replication forks via replication fork reversal (RFR). RuvA specifically binds to HJ cruciform DNA, conferring on it an open structure. The RuvB hexamer acts as an ATP-dependent pump, pulling dsDNA into and through the RuvAB complex. RuvB forms 2 homohexamers on either side of HJ DNA bound by 1 or 2 RuvA tetramers; 4 subunits per hexamer contact DNA at a time. Coordinated motions by a converter formed by DNA-disengaged RuvB subunits stimulates ATP hydrolysis and nucleotide exchange. Immobilization of the converter enables RuvB to convert the ATP-contained energy into a lever motion, pulling 2 nucleotides of DNA out of the RuvA tetramer per ATP hydrolyzed, thus driving DNA branch migration. The RuvB motors rotate together with the DNA substrate, which together with the progressing nucleotide cycle form the mechanistic basis for DNA recombination by continuous HJ branch migration. Branch migration allows RuvC to scan DNA until it finds its consensus sequence, where it cleaves and resolves cruciform DNA. The polypeptide is Holliday junction branch migration complex subunit RuvB (Nitrosospira multiformis (strain ATCC 25196 / NCIMB 11849 / C 71)).